The sequence spans 260 residues: Uroplakin-1b (260 aa).

Over 1–15 (MAKDDSTVRCFQGLL) the chain is Cytoplasmic. The helical transmembrane segment at 16-36 (IFGHVIVGMCGIALTAECIFF) threads the bilayer. The Extracellular portion of the chain corresponds to 37–59 (VSDQHSLYPLLEATNNDDIFGAA). The chain crosses the membrane as a helical span at residues 60–80 (WIGMFVGICLFCLSVLAIVGI). Topologically, residues 81-86 (MKSNRK) are cytoplasmic. A helical transmembrane segment spans residues 87–107 (ILLAYFIMMFIVYGFEVASCI). At 108-229 (TAATQRDFFT…ELISGPMDRH (122 aa)) the chain is on the extracellular side. A helical membrane pass occupies residues 230–250 (AWGVAWFGFAILCWTFWVLLG). At 251–260 (TMFYWSRIEY) the chain is on the cytoplasmic side.

This sequence belongs to the tetraspanin (TM4SF) family. As to quaternary structure, heterodimer with uroplakin-3A (UPK3A) or uroplakin-3B (UPK3B). N-glycosylated with high-mannose oligosaccharides. Bladder epithelium.

The protein localises to the membrane. In terms of biological role, component of the asymmetric unit membrane (AUM); a highly specialized biomembrane elaborated by terminally differentiated urothelial cells. May play an important role in normal bladder epithelial physiology, possibly in regulating membrane permeability of superficial umbrella cells or in stabilizing the apical membrane through AUM/cytoskeletal interactions. This is Uroplakin-1b (Upk1b) from Mus musculus (Mouse).